The primary structure comprises 209 residues: MLKRSIMTLYSGPLDIYSHQVRIVLAEKGVTVDIHNVDANHPSEDLIELNPYATLPTLVDRDLVLFESRVIMEYLDERFPHPPLLPVYPVARSRCRLLMYRIERNFYHSMKIIEEGTPKQAETEREFLTKELIELDPVFGEKTYFMNDDFTLVDCVMAPLLWRLPHLGVHVPPRAAKSMYKYKKLIFERESFKASLSESESELREVDGI.

Residues 5-83 (SIMTLYSGPL…YLDERFPHPP (79 aa)) enclose the GST N-terminal domain. The GST C-terminal domain maps to 88–203 (YPVARSRCRL…ASLSESESEL (116 aa)).

This sequence belongs to the GST superfamily. HSP26 family.

Functionally, forms an equimolar complex with the RNA polymerase holoenzyme (RNAP) but not with the core enzyme. This Coxiella burnetii (strain RSA 493 / Nine Mile phase I) protein is Stringent starvation protein A homolog (sspA).